The following is a 445-amino-acid chain: Exodeoxyribonuclease 7 large subunit (445 aa).

Belongs to the XseA family. As to quaternary structure, heterooligomer composed of large and small subunits.

Its subcellular location is the cytoplasm. It catalyses the reaction Exonucleolytic cleavage in either 5'- to 3'- or 3'- to 5'-direction to yield nucleoside 5'-phosphates.. In terms of biological role, bidirectionally degrades single-stranded DNA into large acid-insoluble oligonucleotides, which are then degraded further into small acid-soluble oligonucleotides. The polypeptide is Exodeoxyribonuclease 7 large subunit (Shewanella pealeana (strain ATCC 700345 / ANG-SQ1)).